The chain runs to 84 residues: MADTGKGSSVAGCNDSCGCPSPCPGGNSCRCRMREASAGDQGHMVCPCGEHCGCNPCNCPKTQTQTSAKGCTCGEGCTCASCAT.

The segment at 1-26 (MADTGKGSSVAGCNDSCGCPSPCPGG) is disordered.

It belongs to the metallothionein superfamily. Type 15 family. In terms of tissue distribution, expressed specifically in seeds.

The protein localises to the cytoplasm. Its subcellular location is the nucleus. The protein resides in the cell membrane. Functionally, metallothioneins have a high content of cysteine residues that bind various heavy metals. Functions as a metal chelator of copper (Cu) and zinc (Zn). Plays a role in storing and distributing Zn ion in seed. The chain is Metallothionein-like protein 4A (MT4A) from Arabidopsis thaliana (Mouse-ear cress).